A 288-amino-acid chain; its full sequence is Structure-specific endonuclease subunit SLX1 (288 aa).

Positions 7–90 (PFYGVYLLQS…QHPNMTRLIT (84 aa)) constitute a GIY-YIG domain.

The protein belongs to the SLX1 family. In terms of assembly, forms a heterodimer with SLX4. A divalent metal cation is required as a cofactor.

Its subcellular location is the nucleus. In terms of biological role, catalytic subunit of the SLX1-SLX4 structure-specific endonuclease that resolves DNA secondary structures generated during DNA repair and recombination. Has endonuclease activity towards branched DNA substrates, introducing single-strand cuts in duplex DNA close to junctions with ss-DNA. The protein is Structure-specific endonuclease subunit SLX1 of Yarrowia lipolytica (strain CLIB 122 / E 150) (Yeast).